A 551-amino-acid chain; its full sequence is Palmdelphin (551 aa).

Met1 is subject to N-acetylmethionine. Positions 12–106 (QAITDKRKIQ…LQISANEEVI (95 aa)) form a coiled coil. Lys125 participates in a covalent cross-link: Glycyl lysine isopeptide (Lys-Gly) (interchain with G-Cter in SUMO2). Phosphoserine occurs at positions 135 and 163. Lys178 is covalently cross-linked (Glycyl lysine isopeptide (Lys-Gly) (interchain with G-Cter in SUMO1); alternate). A Glycyl lysine isopeptide (Lys-Gly) (interchain with G-Cter in SUMO2); alternate cross-link involves residue Lys178. A compositionally biased stretch (basic and acidic residues) spans 247 to 258 (ERNSKSPTEYHE). A disordered region spans residues 247–267 (ERNSKSPTEYHEPVYANPFCR). Residue Thr270 is modified to Phosphothreonine. 2 disordered regions span residues 298 to 387 (HESE…CSSP) and 452 to 536 (EDDE…DPSL). Phosphoserine occurs at positions 322, 350, 371, 376, 385, and 386. Over residues 484–495 (KRSEVSPHENTN) the composition is skewed to basic and acidic residues. Phosphoserine is present on residues Ser498, Ser515, and Ser520.

The protein belongs to the paralemmin family. As to quaternary structure, interacts with GLUL. Phosphorylated. In terms of tissue distribution, expressed in the brain and the spinal cord. Expressed in the anterior olfactory nucleus, the olfactory tubercle, the nucleus supraopticus, the nucleus of the lateral olfactory tract, the piriform cortex, the cortico-amygdaloid transition zone, the septofimbrial nucleus and the indusium griseum (at protein level).

The protein localises to the cytoplasm. It is found in the cell projection. Its subcellular location is the dendrite. The protein resides in the dendritic spine. The protein is Palmdelphin (Palmd) of Rattus norvegicus (Rat).